Consider the following 44-residue polypeptide: Photosystem I reaction center subunit IX (44 aa).

A helical membrane pass occupies residues 7 to 27 (YLSVAPVLSTLWFGSLAGLLI).

The protein belongs to the PsaJ family.

The protein localises to the plastid. Its subcellular location is the chloroplast thylakoid membrane. May help in the organization of the PsaE and PsaF subunits. The chain is Photosystem I reaction center subunit IX from Fagopyrum esculentum subsp. ancestrale (Wild buckwheat).